The primary structure comprises 295 residues: 33 kDa chaperonin (295 aa).

2 disulfide bridges follow: Cys-230–Cys-232 and Cys-264–Cys-267.

The protein belongs to the HSP33 family. Under oxidizing conditions two disulfide bonds are formed involving the reactive cysteines. Under reducing conditions zinc is bound to the reactive cysteines and the protein is inactive.

The protein localises to the cytoplasm. Its function is as follows. Redox regulated molecular chaperone. Protects both thermally unfolding and oxidatively damaged proteins from irreversible aggregation. Plays an important role in the bacterial defense system toward oxidative stress. This is 33 kDa chaperonin from Ectopseudomonas mendocina (strain ymp) (Pseudomonas mendocina).